The sequence spans 1578 residues: BRD4-interacting chromatin-remodeling complex-associated protein (1578 aa).

3 disordered regions span residues 80–101, 631–673, and 725–951; these read DILG…DQPC, PAVT…PSLA, and IVSA…PPPR. Positions 86–96 are enriched in gly residues; sequence AAGGGGGGGGA. 2 stretches are compositionally biased toward low complexity: residues 631-662 and 764-782; these read PAVT…TQPQ and IPAA…PSLP. 3 stretches are compositionally biased toward pro residues: residues 793 to 816, 824 to 841, and 865 to 888; these read MPSP…PPSQ, PSEP…PPTL, and PGPP…PASH. Positions 889 to 906 are enriched in low complexity; the sequence is LPPASTPSAVASSSEPSA. Residue Ser-929 is modified to Phosphoserine. A Phosphothreonine modification is found at Thr-931. The segment covering 942-951 has biased composition (pro residues); it reads PTAPPPPPPR. Lys-1067 bears the N6-acetyllysine mark. Residues 1206 to 1316 are disordered; sequence EKPDEYVSSS…NRPPIKTYEA (111 aa). 2 stretches are compositionally biased toward low complexity: residues 1233–1247 and 1275–1294; these read SHGQ…GTSA and ASSS…AASS. Lys-1327 is covalently cross-linked (Glycyl lysine isopeptide (Lys-Gly) (interchain with G-Cter in SUMO2)). Disordered stretches follow at residues 1342 to 1435 and 1457 to 1578; these read DPVH…PTKV and VLKG…TLNR. Residues 1346 to 1370 show a composition bias toward pro residues; that stretch reads QPLPAPTPAKGAEPPPHPAPPPLPP. The residue at position 1427 (Ser-1427) is a Phosphoserine. Over residues 1502-1532 the composition is skewed to polar residues; that stretch reads ASFSSDSPQDDTLTEHLQSAIDSILNLQQAP. The span at 1538-1553 shows a compositional bias: pro residues; sequence GPYPHTGPTPGTPTSP.

In terms of assembly, component of the multiprotein chromatin-remodeling complexes SWI/SNF: SWI/SNF-A (BAF), SWI/SNF-B (PBAF) and related complexes. The canonical complex contains a catalytic subunit (either SMARCA4/BRG1/BAF190A or SMARCA2/BRM/BAF190B) and at least SMARCE1, ACTL6A/BAF53, SMARCC1/BAF155, SMARCC2/BAF170, and SMARCB1/SNF5/BAF47. Other subunits specific to each of the complexes may also be present permitting several possible combinations developmentally and tissue specific. Component of the SWI/SNF (GBAF) subcomplex, which includes at least BICRA or BICRAL (mutually exclusive), BRD9, SS18, the core BAF subunits, SMARCA2/BRM, SMARCA4/BRG1/BAF190A, ACTL6A/BAF53, SMARCC1/BAF155, and SMARCD1/BAF60A. Interacts with BRD4; the interaction bridges BRD4 to the GBAF complex.

It is found in the nucleus. Its function is as follows. Component of SWI/SNF chromatin remodeling subcomplex GBAF that carries out key enzymatic activities, changing chromatin structure by altering DNA-histone contacts within a nucleosome in an ATP-dependent manner. May play a role in BRD4-mediated gene transcription. In Mus musculus (Mouse), this protein is BRD4-interacting chromatin-remodeling complex-associated protein.